Here is a 2174-residue protein sequence, read N- to C-terminus: Mediator of RNA polymerase II transcription subunit 13 (2174 aa).

Ser-395 carries the phosphoserine modification. The interval 435-477 is disordered; that stretch reads RNAGQQGQAPSLGQQQQILPKHKTNEKQEKSEKPQKRPLTPFH. Positions 438–451 are enriched in low complexity; it reads GQQGQAPSLGQQQQ. Residues 457 to 469 are compositionally biased toward basic and acidic residues; it reads KTNEKQEKSEKPQ. Residues Ser-500, Ser-504, Ser-530, and Ser-537 each carry the phosphoserine modification. Over residues 709–730 the composition is skewed to basic and acidic residues; that stretch reads FPDKKDRQNSEREAGKKHKVED. 3 disordered regions span residues 709-735, 749-769, and 787-816; these read FPDK…TSSV, SPSI…PSTS, and FNSD…ESKT. Residues 805–815 are compositionally biased toward basic and acidic residues; it reads SDDKASCKESK. A phosphoserine mark is found at Ser-826 and Ser-890. Residues 959–1054 are disordered; that stretch reads FIKEGDGSNM…ASTPSTCRPL (96 aa). Over residues 992–1003 the composition is skewed to low complexity; sequence PPSNSGAGILPS. Pro residues predominate over residues 1004-1015; the sequence is PSTPRFPTPRTP. Ser-1029 carries the phosphoserine modification. Positions 1040-1053 are enriched in polar residues; sequence DLYSPASTPSTCRP. 2 short sequence motifs (LXXLL motif) span residues 1188–1192 and 1279–1283; these read LILLL and LRMLL. Polar residues-rich tracts occupy residues 1484–1498 and 1563–1606; these read SQSL…NTGN and SMNS…SLPT. Disordered stretches follow at residues 1484 to 1505, 1557 to 1617, and 2015 to 2048; these read SQSL…PSAT, SFPP…ESTM, and LPAS…RLLS.

It belongs to the Mediator complex subunit 13 family. In terms of assembly, component of the Mediator complex, which is composed of MED1, MED4, MED6, MED7, MED8, MED9, MED10, MED11, MED12, MED13, MED13L, MED14, MED15, MED16, MED17, MED18, MED19, MED20, MED21, MED22, MED23, MED24, MED25, MED26, MED27, MED29, MED30, MED31, CCNC, CDK8 and CDC2L6/CDK11. The MED12, MED13, CCNC and CDK8 subunits form a distinct module termed the CDK8 module. Mediator containing the CDK8 module is less active than Mediator lacking this module in supporting transcriptional activation. Individual preparations of the Mediator complex lacking one or more distinct subunits have been variously termed ARC, CRSP, DRIP, PC2, SMCC and TRAP. As to expression, ubiquitous.

It is found in the nucleus. Component of the Mediator complex, a coactivator involved in the regulated transcription of nearly all RNA polymerase II-dependent genes. Mediator functions as a bridge to convey information from gene-specific regulatory proteins to the basal RNA polymerase II transcription machinery. Mediator is recruited to promoters by direct interactions with regulatory proteins and serves as a scaffold for the assembly of a functional preinitiation complex with RNA polymerase II and the general transcription factors. The polypeptide is Mediator of RNA polymerase II transcription subunit 13 (Homo sapiens (Human)).